Here is a 140-residue protein sequence, read N- to C-terminus: Cysteine proteinase inhibitor 1 (140 aa).

The first 26 residues, 1–26 (MRKYRVAGLVAALLVLHSLATPSAQA), serve as a signal peptide directing secretion. Residues 48-135 (GGVEPVGNEN…KELQEFKPVD (88 aa)) form the Cystatin domain. The Secondary area of contact signature appears at 91–95 (QVVAG).

It belongs to the cystatin family. Phytocystatin subfamily.

The protein localises to the secreted. Its function is as follows. There are two distinct cystatins in rice seeds (Oryzacystatin-1 and -2) with different specificities against cysteine proteinases. May be involved in the control of germination by inhibition of endogenous cysteine proteinases. May play a role in defense by inhibiting exogenous proteases such as those present in digestive tracks of insects and nematodes. This Oryza sativa subsp. japonica (Rice) protein is Cysteine proteinase inhibitor 1.